Consider the following 521-residue polypeptide: Lymphocyte activation gene 3 protein (521 aa).

A signal peptide spans 1–23 (MREDLLLGFLLLGLLWEAPVVSS). The Extracellular portion of the chain corresponds to 24-442 (GPGKELPVVW…ISGDLKGGHL (419 aa)). The Ig-like V-type domain maps to 37 to 163 (GAPVHLPCSL…LSCSLRLRVG (127 aa)). The interaction with FGL1 stretch occupies residues 37 to 246 (GAPVHLPCSL…LTYRDGFNVS (210 aa)). Residues C44 and C156 are joined by a disulfide bond. 3 consecutive Ig-like C2-type domains span residues 165 to 246 (ASMI…FNVS), 258 to 341 (PVAP…ATVT), and 345 to 412 (ITVT…EGQR). N184 is a glycosylation site (N-linked (GlcNAc...) asparagine). The cysteines at positions 185 and 235 are disulfide-linked. 4 N-linked (GlcNAc...) asparagine glycosylation sites follow: N244, N309, N337, and N381. C276 and C327 are oxidised to a cystine. C363 and C405 are joined by a disulfide. A connecting peptide region spans residues 422–442 (ESSSGAHSARRISGDLKGGHL). Residues 443–463 (VLVLILGALSLFLLVAGAFGF) traverse the membrane as a helical segment. Residues 464–521 (HWWRKQLLLRRFSALEHGIQPFPAQRKIEELERELETEMGQEPEPEPEPQLEPEPRQL) are Cytoplasmic-facing. Residues 490–495 (KIEELE) carry the KIEELE motif motif. The segment at 493–518 (ELERELETEMGQEPEPEPEPQLEPEP) is 13 X 2 AA tandem repeats of E-X. The segment at 493–521 (ELERELETEMGQEPEPEPEPQLEPEPRQL) is disordered. A compositionally biased stretch (acidic residues) spans 500 to 514 (TEMGQEPEPEPEPQL).

This sequence belongs to the LAG3 family. In terms of assembly, interacts with MHC class II (MHC-II); selectively recognizes stable complexes of peptide and MHC-II. Interacts with FGL1 (via the Fibrinogen C-terminal domain). Post-translationally, proteolytically cleaved by ADAM10 and ADAM17 within the connecting peptide region, leading to release of Secreted lymphocyte activation gene 3 protein (sLAG-3). ADAM10 mediates constitutive cleavage, but cleavage increases following T-cell activation, whereas shedding by ADAM17 is induced by TCR signaling in a PRKCQ-dependent manner. Primarily expressed in activated CD4(+) and CD8(+) T-cells. Also expressed in a subset of regulatory T-cells (Tregs), such as natural CD4(+)CD25(+) Tregs. Also expressed on plasmacytoid dendritic cells (pDCs).

It is found in the cell membrane. It localises to the secreted. Its function is as follows. Lymphocyte activation gene 3 protein: Inhibitory receptor on antigen activated T-cells. Delivers inhibitory signals upon binding to ligands, such as FGL1. FGL1 constitutes a major ligand of LAG3 and is responsible for LAG3 T-cell inhibitory function. Following TCR engagement, LAG3 associates with CD3-TCR in the immunological synapse and directly inhibits T-cell activation. May inhibit antigen-specific T-cell activation in synergy with PDCD1/PD-1, possibly by acting as a coreceptor for PDCD1/PD-1. Negatively regulates the proliferation, activation, effector function and homeostasis of both CD8(+) and CD4(+) T-cells. Also mediates immune tolerance: constitutively expressed on a subset of regulatory T-cells (Tregs) and contributes to their suppressive function. Also acts as a negative regulator of plasmacytoid dendritic cell (pDCs) activation. Binds MHC class II (MHC-II); the precise role of MHC-II-binding is however unclear. May function as a ligand for MHC class II (MHC-II) on antigen-presenting cells (APC), promoting APC activation/maturation and driving Th1 immune response. The polypeptide is Lymphocyte activation gene 3 protein (Mus musculus (Mouse)).